A 124-amino-acid polypeptide reads, in one-letter code: Large-conductance mechanosensitive channel (124 aa).

The next 2 membrane-spanning stretches (helical) occupy residues 15–35 (MDLA…NSLV) and 67–87 (GSFL…FFLI).

This sequence belongs to the MscL family. As to quaternary structure, homopentamer.

The protein localises to the cell membrane. Functionally, channel that opens in response to stretch forces in the membrane lipid bilayer. May participate in the regulation of osmotic pressure changes within the cell. The protein is Large-conductance mechanosensitive channel of Lactobacillus johnsonii (strain CNCM I-12250 / La1 / NCC 533).